Reading from the N-terminus, the 147-residue chain is Small ribosomal subunit protein uS12 (147 aa).

Belongs to the universal ribosomal protein uS12 family. Part of the 30S ribosomal subunit.

With S4 and S5 plays an important role in translational accuracy. Located at the interface of the 30S and 50S subunits. This is Small ribosomal subunit protein uS12 from Staphylothermus marinus (strain ATCC 43588 / DSM 3639 / JCM 9404 / F1).